Reading from the N-terminus, the 436-residue chain is Adenosylmethionine-8-amino-7-oxononanoate aminotransferase (436 aa).

Position 66 (W66) interacts with substrate. 126–127 (GS) is a binding site for pyridoxal 5'-phosphate. Residue Y159 participates in substrate binding. Pyridoxal 5'-phosphate is bound at residue D256. K285 and G318 together coordinate substrate. The residue at position 285 (K285) is an N6-(pyridoxal phosphate)lysine. 319 to 320 (PT) is a binding site for pyridoxal 5'-phosphate. R402 is a substrate binding site.

It belongs to the class-III pyridoxal-phosphate-dependent aminotransferase family. BioA subfamily. As to quaternary structure, homodimer. Pyridoxal 5'-phosphate serves as cofactor.

The protein localises to the cytoplasm. The enzyme catalyses (8S)-8-amino-7-oxononanoate + S-adenosyl-L-methionine = S-adenosyl-4-methylsulfanyl-2-oxobutanoate + (7R,8S)-7,8-diammoniononanoate. Its pathway is cofactor biosynthesis; biotin biosynthesis; 7,8-diaminononanoate from 8-amino-7-oxononanoate (SAM route): step 1/1. Functionally, catalyzes the transfer of the alpha-amino group from S-adenosyl-L-methionine (SAM) to 7-keto-8-aminopelargonic acid (KAPA) to form 7,8-diaminopelargonic acid (DAPA). It is the only aminotransferase known to utilize SAM as an amino donor. The sequence is that of Adenosylmethionine-8-amino-7-oxononanoate aminotransferase from Mycobacterium leprae (strain TN).